A 78-amino-acid chain; its full sequence is uncharacterized protein (78 aa).

The next 2 helical transmembrane spans lie at 5 to 24 (LALL…IKLM) and 39 to 61 (LWLQ…AGFI).

The protein resides in the cell membrane. This is an uncharacterized protein from Bacillus subtilis (strain 168).